The following is a 423-amino-acid chain: Aspartate--tRNA(Asp) ligase (423 aa).

Glu163 provides a ligand contact to L-aspartate. Positions 185–188 are aspartate; that stretch reads QLYK. L-aspartate is bound at residue Arg207. ATP is bound by residues 207–209, 215–217, and Glu346; these read RAE and RHL. 2 residues coordinate Mg(2+): Glu346 and Ser349. L-aspartate contacts are provided by Ser349 and Arg353. 394 to 397 is an ATP binding site; sequence GLER.

This sequence belongs to the class-II aminoacyl-tRNA synthetase family. Type 2 subfamily. As to quaternary structure, homodimer. Requires Mg(2+) as cofactor.

The protein localises to the cytoplasm. The catalysed reaction is tRNA(Asp) + L-aspartate + ATP = L-aspartyl-tRNA(Asp) + AMP + diphosphate. Its function is as follows. Catalyzes the attachment of L-aspartate to tRNA(Asp) in a two-step reaction: L-aspartate is first activated by ATP to form Asp-AMP and then transferred to the acceptor end of tRNA(Asp). This Picrophilus torridus (strain ATCC 700027 / DSM 9790 / JCM 10055 / NBRC 100828 / KAW 2/3) protein is Aspartate--tRNA(Asp) ligase.